A 253-amino-acid chain; its full sequence is DNA repair protein RecO (253 aa).

The protein belongs to the RecO family.

In terms of biological role, involved in DNA repair and RecF pathway recombination. This chain is DNA repair protein RecO, found in Dehalococcoides mccartyi (strain ATCC BAA-2100 / JCM 16839 / KCTC 5957 / BAV1).